The chain runs to 1428 residues: DNA topoisomerase 2 (1428 aa).

Residues Asn70, Asn99, 127–129 (SSN), and 140–147 (GRNGYGAK) each bind ATP. Positions 333-336 (KKKK) are interaction with DNA. Residue 365-367 (QTK) coordinates ATP. Positions 443–557 (CTLVLTEGDS…GLLDIQGFLL (115 aa)) constitute a Toprim domain. Mg(2+) contacts are provided by Glu449, Asp526, and Asp528. Residues 692–1159 (IPNVLDGFKP…SAKDIWNTDL (468 aa)) enclose the Topo IIA-type catalytic domain. Tyr782 functions as the O-(5'-phospho-DNA)-tyrosine intermediate in the catalytic mechanism. Residues 965-974 (KLISPISLMN) are interaction with DNA. 4 disordered regions span residues 1083–1102 (KGAT…TENV), 1176–1217 (ARGG…RKGK), 1240–1288 (KAPT…ELSK), and 1303–1428 (MGST…NEED). Thr1086 carries the post-translational modification Phosphothreonine; by CK2. Ser1087 carries the phosphoserine; by CK2 modification. The span at 1207 to 1217 (KNKKSTARKGK) shows a compositional bias: basic residues. At Ser1252 the chain carries Phosphoserine. Thr1258 carries the phosphothreonine; by CK2 modification. Ser1266, Ser1269, and Ser1272 each carry phosphoserine; by CK2. Residues 1275 to 1286 (DIKKEDKDEGEL) are compositionally biased toward basic and acidic residues. The segment covering 1332–1347 (TAVKPKLAKKPVRKQQ) has biased composition (basic residues). Phosphoserine; by CK2 occurs at positions 1353, 1356, 1408, and 1423. Acidic residues predominate over residues 1403–1428 (ELSDDSFIEDDEEENQGSDVSFNEED).

It belongs to the type II topoisomerase family. As to quaternary structure, homodimer. The cofactor is Mg(2+). It depends on Mn(2+) as a cofactor. Requires Ca(2+) as cofactor. Post-translationally, phosphorylation enhances the activity. Stimulates decatenation activity.

It localises to the nucleus. It carries out the reaction ATP-dependent breakage, passage and rejoining of double-stranded DNA.. Its function is as follows. Control of topological states of DNA by transient breakage and subsequent rejoining of DNA strands. Topoisomerase II makes double-strand breaks. Essential during mitosis and meiosis for proper segregation of daughter chromosomes. This chain is DNA topoisomerase 2 (TOP2), found in Saccharomyces cerevisiae (strain ATCC 204508 / S288c) (Baker's yeast).